The following is a 553-amino-acid chain: Membrane protein insertase YidC (553 aa).

The chain crosses the membrane as a helical span at residues leucine 6–phenylalanine 26. Residues asparagine 34–proline 59 are disordered. Residues glutamine 38 to proline 59 show a composition bias toward low complexity. 5 helical membrane-spanning segments follow: residues leucine 331–leucine 351, asparagine 360–threonine 380, valine 424–tyrosine 444, isoleucine 477–glutamine 497, and isoleucine 512–valine 532.

It belongs to the OXA1/ALB3/YidC family. Type 1 subfamily. Interacts with the Sec translocase complex via SecD. Specifically interacts with transmembrane segments of nascent integral membrane proteins during membrane integration.

It is found in the cell inner membrane. Its function is as follows. Required for the insertion and/or proper folding and/or complex formation of integral membrane proteins into the membrane. Involved in integration of membrane proteins that insert both dependently and independently of the Sec translocase complex, as well as at least some lipoproteins. Aids folding of multispanning membrane proteins. This chain is Membrane protein insertase YidC, found in Syntrophobacter fumaroxidans (strain DSM 10017 / MPOB).